Here is a 137-residue protein sequence, read N- to C-terminus: L-ectoine synthase (137 aa).

Positions 118 to 137 (VHREDGSYAPADEADDQKPL) are disordered.

It belongs to the ectoine synthase family.

It carries out the reaction (2S)-4-acetamido-2-aminobutanoate = L-ectoine + H2O. The protein operates within amine and polyamine biosynthesis; ectoine biosynthesis; L-ectoine from L-aspartate 4-semialdehyde: step 3/3. Seems to require potassium ions for its activity and stability. Slightly inhibited by N-ethylmaleimide. Its function is as follows. Catalyzes the circularization of gamma-N-acetyl-alpha,gamma-diaminobutyric acid (ADABA) to ectoine (1,4,5,6-tetrahydro-2-methyl-4-pyrimidine carboxylic acid), which is an excellent osmoprotectant. Does not act on N-acetylated amino acids like N-alpha-acetyl-L-asparagine,N-alpha-acetyl-L-ornithine, N-alpha-acetyl-L-lysine and N-epsilon-acetyl-L-lysine. This chain is L-ectoine synthase (ectC), found in Halomonas elongata (strain ATCC 33173 / DSM 2581 / NBRC 15536 / NCIMB 2198 / 1H9).